Reading from the N-terminus, the 162-residue chain is uncharacterized protein (162 aa).

Residues 1–23 form the signal peptide; it reads MLSLKSPAVLLSMVILVPLFALA.

This is an uncharacterized protein from Mycosarcoma maydis (Corn smut fungus).